The chain runs to 309 residues: Diadenylate cyclase (309 aa).

The DAC domain maps to 144–301 (TITLYELFET…DGKIVFETDP (158 aa)).

This sequence belongs to the adenylate cyclase family. DacZ subfamily. Requires Mn(2+) as cofactor.

The enzyme catalyses 2 ATP = 3',3'-c-di-AMP + 2 diphosphate. Its function is as follows. Diadenylate cyclase that catalyzes the condensation of 2 ATP molecules into cyclic di-AMP (c-di-AMP). c-di-AMP is a second messenger for intracellular signal transduction involved in the control of important regulatory processes such as osmoregulation. The protein is Diadenylate cyclase of Methanocaldococcus jannaschii (strain ATCC 43067 / DSM 2661 / JAL-1 / JCM 10045 / NBRC 100440) (Methanococcus jannaschii).